We begin with the raw amino-acid sequence, 291 residues long: 4-hydroxy-tetrahydrodipicolinate synthase (291 aa).

T44 is a pyruvate binding site. The Proton donor/acceptor role is filled by Y132. K160 serves as the catalytic Schiff-base intermediate with substrate. I202 contributes to the pyruvate binding site.

This sequence belongs to the DapA family. In terms of assembly, homotetramer; dimer of dimers.

It localises to the cytoplasm. The catalysed reaction is L-aspartate 4-semialdehyde + pyruvate = (2S,4S)-4-hydroxy-2,3,4,5-tetrahydrodipicolinate + H2O + H(+). It participates in amino-acid biosynthesis; L-lysine biosynthesis via DAP pathway; (S)-tetrahydrodipicolinate from L-aspartate: step 3/4. Its function is as follows. Catalyzes the condensation of (S)-aspartate-beta-semialdehyde [(S)-ASA] and pyruvate to 4-hydroxy-tetrahydrodipicolinate (HTPA). The sequence is that of 4-hydroxy-tetrahydrodipicolinate synthase from Rhodospirillum centenum (strain ATCC 51521 / SW).